A 178-amino-acid polypeptide reads, in one-letter code: Large ribosomal subunit protein uL6 (178 aa).

This sequence belongs to the universal ribosomal protein uL6 family. As to quaternary structure, part of the 50S ribosomal subunit.

In terms of biological role, this protein binds to the 23S rRNA, and is important in its secondary structure. It is located near the subunit interface in the base of the L7/L12 stalk, and near the tRNA binding site of the peptidyltransferase center. The polypeptide is Large ribosomal subunit protein uL6 (Streptococcus agalactiae serotype V (strain ATCC BAA-611 / 2603 V/R)).